The primary structure comprises 380 residues: 3-dehydroquinate synthase (380 aa).

NAD(+) is bound by residues 100–104 (GAASD), 124–125 (TT), Lys137, and Lys146. Zn(2+) contacts are provided by Glu179, His251, and His267.

Belongs to the sugar phosphate cyclases superfamily. Dehydroquinate synthase family. NAD(+) is required as a cofactor. Co(2+) serves as cofactor. It depends on Zn(2+) as a cofactor.

Its subcellular location is the cytoplasm. It carries out the reaction 7-phospho-2-dehydro-3-deoxy-D-arabino-heptonate = 3-dehydroquinate + phosphate. It participates in metabolic intermediate biosynthesis; chorismate biosynthesis; chorismate from D-erythrose 4-phosphate and phosphoenolpyruvate: step 2/7. Catalyzes the conversion of 3-deoxy-D-arabino-heptulosonate 7-phosphate (DAHP) to dehydroquinate (DHQ). This is 3-dehydroquinate synthase from Tropheryma whipplei (strain TW08/27) (Whipple's bacillus).